The following is a 298-amino-acid chain: Zinc transport system membrane protein TroC (298 aa).

8 consecutive transmembrane segments (helical) span residues 16 to 36 (VVLG…FAVL), 41 to 61 (LFGD…FLLT), 68 to 88 (ILLL…LMVM), 97 to 117 (GAQG…LTHV), 144 to 164 (VLLI…FWKE), 187 to 207 (FMLT…VGVI), 229 to 249 (VLCA…SVVS), and 255 to 275 (LSTG…SIML).

Belongs to the ABC-3 integral membrane protein family.

The protein localises to the cell membrane. Functionally, part of an ATP-driven transport system TroABCD for zinc. In Treponema pallidum (strain Nichols), this protein is Zinc transport system membrane protein TroC (troC).